We begin with the raw amino-acid sequence, 918 residues long: DNA mismatch repair protein MutS (918 aa).

Position 662 to 669 (662 to 669 (GPNMAGKS)) interacts with ATP.

Belongs to the DNA mismatch repair MutS family.

This protein is involved in the repair of mismatches in DNA. It is possible that it carries out the mismatch recognition step. This protein has a weak ATPase activity. This Sorangium cellulosum (strain So ce56) (Polyangium cellulosum (strain So ce56)) protein is DNA mismatch repair protein MutS.